Consider the following 465-residue polypeptide: Probable glucan endo-1,3-beta-glucosidase eglC (465 aa).

The signal sequence occupies residues 1–19 (MFTKTQILALALSIASAEA). Glu128 (proton donor) is an active-site residue. Asn183 is a glycosylation site (N-linked (GlcNAc...) asparagine). Residue Glu239 is the Nucleophile of the active site. Residue Asn318 is glycosylated (N-linked (GlcNAc...) asparagine). Low complexity-rich tracts occupy residues 320 to 333 (SSAS…SAQS) and 380 to 438 (SPSA…ATPA). Disordered regions lie at residues 320–356 (SSAS…GHGG) and 380–440 (SPSA…PADF). Gly442 carries the GPI-anchor amidated glycine lipid modification. Residues 443 to 465 (AGSRLSGSIFGAAMLVAALAVAL) constitute a propeptide, removed in mature form.

It belongs to the glycosyl hydrolase 17 family. Post-translationally, the GPI-anchor is attached to the protein in the endoplasmic reticulum and serves to target the protein to the cell surface. There, the glucosamine-inositol phospholipid moiety is cleaved off and the GPI-modified mannoprotein is covalently attached via its lipidless GPI glycan remnant to the 1,6-beta-glucan of the outer cell wall layer.

It localises to the cell membrane. Its subcellular location is the secreted. It is found in the cell wall. It catalyses the reaction Hydrolysis of (1-&gt;3)-beta-D-glucosidic linkages in (1-&gt;3)-beta-D-glucans.. Glucanases play a role in cell expansion during growth, in cell-cell fusion during mating, and in spore release during sporulation. This enzyme may be involved in beta-glucan degradation and also function biosynthetically as a transglycosylase. This chain is Probable glucan endo-1,3-beta-glucosidase eglC (eglC), found in Emericella nidulans (strain FGSC A4 / ATCC 38163 / CBS 112.46 / NRRL 194 / M139) (Aspergillus nidulans).